The chain runs to 513 residues: Zinc finger CCCH-type with G patch domain-containing protein (513 aa).

Residues 155–178 (PCSYYLEGECRFDETKCRFSHGAL) form a C3H1-type zinc finger. Residues 252 to 261 (DQEEDDELSS) are compositionally biased toward acidic residues. The tract at residues 252-282 (DQEEDDELSSEESNSSMNNESSDEAESDMDD) is disordered. The segment covering 262-271 (EESNSSMNNE) has biased composition (low complexity). Positions 272 to 282 (SSDEAESDMDD) are enriched in acidic residues. The G-patch domain maps to 312-358 (TRGIGSKLMEKMGYIHGTGLGSDGRGIVTPVSAQILPQGRSLDACME). Residues 478-495 (VQMQSHKQELATLQAQER) show a composition bias toward polar residues. The disordered stretch occupies residues 478-513 (VQMQSHKQELATLQAQERSLSKEQQTRKSKNKMFEF). Positions 496-513 (SLSKEQQTRKSKNKMFEF) are enriched in basic and acidic residues.

It is found in the nucleus. Transcription repressor. The polypeptide is Zinc finger CCCH-type with G patch domain-containing protein (Drosophila erecta (Fruit fly)).